Here is a 407-residue protein sequence, read N- to C-terminus: 4-hydroxybenzoate polyprenyltransferase, mitochondrial (407 aa).

Residues 1–20 (MAFFGLSRVSRRLLKSSVSV) constitute a mitochondrion transit peptide. The next 6 helical transmembrane spans lie at 137 to 157 (IGTW…ADPG), 162 to 182 (FKYM…GCTI), 210 to 230 (FQGI…LLQL), 254 to 274 (FTFW…LLGW), 279 to 299 (GSIA…WTLV), and 330 to 350 (LWLT…GFSA).

This sequence belongs to the UbiA prenyltransferase family. The cofactor is Mg(2+). Expressed in flowers.

The protein resides in the mitochondrion inner membrane. The enzyme catalyses an all-trans-polyprenyl diphosphate + 4-hydroxybenzoate = a 4-hydroxy-3-(all-trans-polyprenyl)benzoate + diphosphate. The protein operates within cofactor biosynthesis; ubiquinone biosynthesis. Catalyzes the prenylation of para-hydroxybenzoate (PHB) with an all-trans polyprenyl group. Mediates the second step in the final reaction sequence of coenzyme Q (CoQ) biosynthesis, which is the condensation of the polyisoprenoid side chain with PHB, generating the first membrane-bound Q intermediate. Required for embryo development. The protein is 4-hydroxybenzoate polyprenyltransferase, mitochondrial of Arabidopsis thaliana (Mouse-ear cress).